A 425-amino-acid polypeptide reads, in one-letter code: Glutamyl-tRNA reductase (425 aa).

Residues Thr-49–Arg-52, Ser-107, Glu-112–Gln-114, and Gln-118 each bind substrate. Residue Cys-50 is the Nucleophile of the active site. Position 187 to 192 (Gly-187 to Ile-192) interacts with NADP(+).

This sequence belongs to the glutamyl-tRNA reductase family. As to quaternary structure, homodimer.

It carries out the reaction (S)-4-amino-5-oxopentanoate + tRNA(Glu) + NADP(+) = L-glutamyl-tRNA(Glu) + NADPH + H(+). It participates in porphyrin-containing compound metabolism; protoporphyrin-IX biosynthesis; 5-aminolevulinate from L-glutamyl-tRNA(Glu): step 1/2. Functionally, catalyzes the NADPH-dependent reduction of glutamyl-tRNA(Glu) to glutamate 1-semialdehyde (GSA). This chain is Glutamyl-tRNA reductase, found in Pseudomonas putida (strain ATCC 700007 / DSM 6899 / JCM 31910 / BCRC 17059 / LMG 24140 / F1).